The following is a 404-amino-acid chain: Tryptophan synthase beta chain (404 aa).

Residue K98 is modified to N6-(pyridoxal phosphate)lysine.

It belongs to the TrpB family. As to quaternary structure, tetramer of two alpha and two beta chains. It depends on pyridoxal 5'-phosphate as a cofactor.

The enzyme catalyses (1S,2R)-1-C-(indol-3-yl)glycerol 3-phosphate + L-serine = D-glyceraldehyde 3-phosphate + L-tryptophan + H2O. It participates in amino-acid biosynthesis; L-tryptophan biosynthesis; L-tryptophan from chorismate: step 5/5. Functionally, the beta subunit is responsible for the synthesis of L-tryptophan from indole and L-serine. This chain is Tryptophan synthase beta chain, found in Rhodopseudomonas palustris (strain ATCC BAA-98 / CGA009).